Here is an 83-residue protein sequence, read N- to C-terminus: Arminin 3a (83 aa).

Positions Met1–Ala18 are cleaved as a signal peptide. Residues Arg19–Ala57 constitute a propeptide that is removed on maturation. Ala80 carries the post-translational modification Alanine amide.

Belongs to the arminin family. As to expression, expressed in entodermal epithelium along the body column.

It is found in the secreted. The protein localises to the target cell membrane. Antimicrobial peptide with a broad-spectrum antimicrobial activity. Keeps its antibacterial activity under a wide range of salt concentrations that mimic physiological conditions of human blood, which is surprising, since Hydra is an obligate freshwater animal with nearly no salt tolerance. Does not affect red blood cells. The polypeptide is Arminin 3a (Hydra vulgaris (Hydra)).